The primary structure comprises 435 residues: Methanethiol oxidase (435 aa).

A signal peptide spans 1–24 (MKKHLLAGACALAMGFAVIPGTFA).

Belongs to the selenium-binding protein family. As to quaternary structure, homotetramer. It depends on Cu cation as a cofactor.

Its subcellular location is the periplasm. It carries out the reaction methanethiol + O2 + H2O = hydrogen sulfide + formaldehyde + H2O2 + H(+). Its pathway is organosulfur degradation. Inhibited by EDTA but not by EGTA. Its function is as follows. Catalyzes the oxidation of methanethiol. Can also degrade ethanethiol, but not methanol, methylamine or dimethylsulfide. The polypeptide is Methanethiol oxidase (Hyphomicrobium sp).